The following is a 158-amino-acid chain: Small ribosomal subunit protein uS19 (158 aa).

This sequence belongs to the universal ribosomal protein uS19 family.

Its function is as follows. Protein S19 forms a complex with S13 that binds strongly to the 16S ribosomal RNA. The sequence is that of Small ribosomal subunit protein uS19 from Pyrobaculum neutrophilum (strain DSM 2338 / JCM 9278 / NBRC 100436 / V24Sta) (Thermoproteus neutrophilus).